The sequence spans 591 residues: L-fucose isomerase (591 aa).

Catalysis depends on proton acceptor residues E337 and D361. Residues E337, D361, and H528 each contribute to the Mn(2+) site.

This sequence belongs to the L-fucose isomerase family. As to quaternary structure, homohexamer. It depends on Mn(2+) as a cofactor.

It localises to the cytoplasm. The catalysed reaction is L-fucose = L-fuculose. It participates in carbohydrate degradation; L-fucose degradation; L-lactaldehyde and glycerone phosphate from L-fucose: step 1/3. Its function is as follows. Converts the aldose L-fucose into the corresponding ketose L-fuculose. This is L-fucose isomerase from Escherichia coli O157:H7 (strain EC4115 / EHEC).